A 142-amino-acid polypeptide reads, in one-letter code: 3-hydroxyacyl-[acyl-carrier-protein] dehydratase FabZ (142 aa).

The active site involves His48.

This sequence belongs to the thioester dehydratase family. FabZ subfamily.

It is found in the cytoplasm. The enzyme catalyses a (3R)-hydroxyacyl-[ACP] = a (2E)-enoyl-[ACP] + H2O. Its function is as follows. Involved in unsaturated fatty acids biosynthesis. Catalyzes the dehydration of short chain beta-hydroxyacyl-ACPs and long chain saturated and unsaturated beta-hydroxyacyl-ACPs. This is 3-hydroxyacyl-[acyl-carrier-protein] dehydratase FabZ from Prochlorococcus marinus (strain MIT 9313).